The primary structure comprises 1639 residues: Peroxide stress-activated histidine kinase mak1 (1639 aa).

Polar residues predominate over residues 38–49; it reads SFTNSQNSSVGS. A disordered region spans residues 38 to 76; it reads SFTNSQNSSVGSVHSPILESPTSLNRQHRNSFSFNNVSS. The segment covering 67–76 has biased composition (low complexity); the sequence is NSFSFNNVSS. One can recognise a PAS 1 domain in the interval 716-786; the sequence is PFPLLKVIID…NDWKSSLFSG (71 aa). The 53-residue stretch at 789–841 folds into the PAC 1 domain; the sequence is FYHEIRLQRFDNVYRYFICRAVPLRDCTGSVLHFFGTMTDVHDQKLAERELQK. The region spanning 848–920 is the PAS 2 domain; the sequence is NENSYRSLAE…ESLEGTFNNQ (73 aa). Positions 929–982 constitute a PAC 2 domain; it reads FAAEIRFRSTDGHYRWHLVKSVCVNNSADTSTNLWLGTCTDIHDHKMLEEKLQE. Positions 1000–1223 constitute a Histidine kinase domain; that stretch reads NMSHEIRTPL…RFMWTATFTM (224 aa). Residue His1003 is modified to Phosphohistidine; by autocatalysis. The region spanning 1507 to 1629 is the Response regulatory domain; it reads SVLLAEDNII…HLSLIISGIL (123 aa). The residue at position 1559 (Asp1559) is a 4-aspartylphosphate.

It is found in the cytoplasm. The catalysed reaction is ATP + protein L-histidine = ADP + protein N-phospho-L-histidine.. Functionally, involved in the control of the SAPK-dependent transcriptional response to peroxide stress. Also has a role in G2/M regulation. The protein is Peroxide stress-activated histidine kinase mak1 (mak1) of Schizosaccharomyces pombe (strain 972 / ATCC 24843) (Fission yeast).